Consider the following 271-residue polypeptide: 3-methyl-2-oxobutanoate hydroxymethyltransferase (271 aa).

Asp53 and Asp92 together coordinate Mg(2+). Residues 53–54, Asp92, and Lys120 contribute to the 3-methyl-2-oxobutanoate site; that span reads DS. Residue Glu122 participates in Mg(2+) binding. The active-site Proton acceptor is Glu189.

Belongs to the PanB family. In terms of assembly, homodecamer; pentamer of dimers. It depends on Mg(2+) as a cofactor.

The protein resides in the cytoplasm. It catalyses the reaction 3-methyl-2-oxobutanoate + (6R)-5,10-methylene-5,6,7,8-tetrahydrofolate + H2O = 2-dehydropantoate + (6S)-5,6,7,8-tetrahydrofolate. Its pathway is cofactor biosynthesis; (R)-pantothenate biosynthesis; (R)-pantoate from 3-methyl-2-oxobutanoate: step 1/2. Functionally, catalyzes the reversible reaction in which hydroxymethyl group from 5,10-methylenetetrahydrofolate is transferred onto alpha-ketoisovalerate to form ketopantoate. The protein is 3-methyl-2-oxobutanoate hydroxymethyltransferase of Burkholderia multivorans (strain ATCC 17616 / 249).